Reading from the N-terminus, the 346-residue chain is Phenylalanine--tRNA ligase alpha subunit (346 aa).

Mg(2+) is bound at residue Glu-259.

This sequence belongs to the class-II aminoacyl-tRNA synthetase family. Phe-tRNA synthetase alpha subunit type 1 subfamily. Tetramer of two alpha and two beta subunits. Mg(2+) is required as a cofactor.

It localises to the cytoplasm. The catalysed reaction is tRNA(Phe) + L-phenylalanine + ATP = L-phenylalanyl-tRNA(Phe) + AMP + diphosphate + H(+). The protein is Phenylalanine--tRNA ligase alpha subunit of Lactococcus lactis subsp. lactis (strain IL1403) (Streptococcus lactis).